The sequence spans 148 residues: UPF0756 membrane protein YeaL (148 aa).

Transmembrane regions (helical) follow at residues 14–34, 51–71, 86–106, and 121–141; these read ALGF…LIIV, LSIG…SGTL, LVAI…VTLM, and VLGV…AGLV.

This sequence belongs to the UPF0756 family.

The protein localises to the cell membrane. The polypeptide is UPF0756 membrane protein YeaL (Shigella dysenteriae serotype 1 (strain Sd197)).